The following is a 421-amino-acid chain: Testin (421 aa).

A PET domain is found at 92–199 (MILTNPVAAK…GDVKLPREMD (108 aa)). The segment at 133 to 164 (EKQPVAGSEGAQYRKKQLAKQLPAHDQDPSKC) is disordered. Positions 155–164 (PAHDQDPSKC) are enriched in basic and acidic residues. LIM zinc-binding domains are found at residues 234–297 (YSCY…CDSE), 299–359 (PRCA…NHAV), and 362–421 (QGCH…KMMS).

The protein belongs to the prickle / espinas / testin family. As to quaternary structure, interacts via LIM domain 1 with ZYX. Interacts (via LIM domain 3) with ENAH and VASP. Interacts with ALKBH4, talin, actin, alpha-actinin, GRIP1 and PXN. Interacts (via LIM domain 2) with ACTL7A (via N-terminus). Heterodimer with ACTL7A; the heterodimer interacts with ENAH to form a heterotrimer.

The protein resides in the cytoplasm. It localises to the cell junction. Its subcellular location is the focal adhesion. Its function is as follows. Scaffold protein that may play a role in cell adhesion, cell spreading and in the reorganization of the actin cytoskeleton. Plays a role in the regulation of cell proliferation. May act as a tumor suppressor. The protein is Testin (TES) of Mustela putorius furo (European domestic ferret).